The sequence spans 354 residues: MQLSSSFPISPPKIFPSTKHHKPPVITHQLAAQIQSNRRHFVSPVKVSGYFSSISRAIEEEEEYRKARAAVNRKGVELESYAIEGISVGGHETCVIVPELKCVFDIGRCPSRAIQQKFLFITHAHLDHIGGLPMYVASRGLYNLEPPKIFVPPSIKEDVEKLLEIHRTMGQVELNVELIPLAVGETYELRNDIVVRPFATHHVIPSQGYVIYSVRKKLQKQYAHLKGKQIEKIKKSGVEITDTILSPEIAFTGDTTSEYMLDPRNADALRAKVLITEATFLDESFSTEHAQALGHTHISQIIENAKWIRSKTVLLTHFSSRYHVEEIREAVLKLQSKVSAKVIPLTEGFRSRYS.

Positions 1–21 are disordered; the sequence is MQLSSSFPISPPKIFPSTKHH. The N-terminal 68 residues, 1–68, are a transit peptide targeting the chloroplast; sequence MQLSSSFPIS…EEEEEYRKAR (68 aa).

Belongs to the RNase Z family. As to quaternary structure, homodimer. Requires Zn(2+) as cofactor. Ca(2+) is required as a cofactor. The cofactor is Mn(2+). Mg(2+) serves as cofactor. Highly expressed in green and actively dividing tissues.

Its subcellular location is the plastid. The protein localises to the chloroplast. The catalysed reaction is Endonucleolytic cleavage of RNA, removing extra 3' nucleotides from tRNA precursor, generating 3' termini of tRNAs. A 3'-hydroxy group is left at the tRNA terminus and a 5'-phosphoryl group is left at the trailer molecule.. Its function is as follows. Zinc phosphodiesterase, which displays tRNA 3'-processing endonuclease activity. Involved in tRNA maturation, by removing a 3'-trailer from precursor tRNA. The polypeptide is tRNase Z TRZ2, chloroplastic (Arabidopsis thaliana (Mouse-ear cress)).